Here is a 183-residue protein sequence, read N- to C-terminus: Peptidyl-tRNA hydrolase (183 aa).

Tyrosine 14 lines the tRNA pocket. Histidine 19 serves as the catalytic Proton acceptor. Residues tyrosine 60 and asparagine 62 each coordinate tRNA.

Belongs to the PTH family. In terms of assembly, monomer.

The protein localises to the cytoplasm. It catalyses the reaction an N-acyl-L-alpha-aminoacyl-tRNA + H2O = an N-acyl-L-amino acid + a tRNA + H(+). Functionally, hydrolyzes ribosome-free peptidyl-tRNAs (with 1 or more amino acids incorporated), which drop off the ribosome during protein synthesis, or as a result of ribosome stalling. Its function is as follows. Catalyzes the release of premature peptidyl moieties from peptidyl-tRNA molecules trapped in stalled 50S ribosomal subunits, and thus maintains levels of free tRNAs and 50S ribosomes. This is Peptidyl-tRNA hydrolase from Mycoplasmoides gallisepticum (strain R(low / passage 15 / clone 2)) (Mycoplasma gallisepticum).